Here is a 768-residue protein sequence, read N- to C-terminus: Lon protease (768 aa).

The Lon N-terminal domain maps to 4 to 198 (APFLPIRDLV…RILDEIVAEM (195 aa)). 349–356 (GPPGIGKT) lines the ATP pocket. The Lon proteolytic domain occupies 586-768 (TGKIGVVNGL…DDVSKLVFVK (183 aa)). Catalysis depends on residues serine 674 and lysine 717.

Belongs to the peptidase S16 family. As to quaternary structure, homohexamer. Organized in a ring with a central cavity.

Its subcellular location is the cytoplasm. The catalysed reaction is Hydrolysis of proteins in presence of ATP.. Functionally, ATP-dependent serine protease that mediates the selective degradation of mutant and abnormal proteins as well as certain short-lived regulatory proteins. Required for cellular homeostasis and for survival from DNA damage and developmental changes induced by stress. Degrades polypeptides processively to yield small peptide fragments that are 5 to 10 amino acids long. Binds to DNA in a double-stranded, site-specific manner. This Fusobacterium nucleatum subsp. nucleatum (strain ATCC 25586 / DSM 15643 / BCRC 10681 / CIP 101130 / JCM 8532 / KCTC 2640 / LMG 13131 / VPI 4355) protein is Lon protease.